A 209-amino-acid chain; its full sequence is Imidazole glycerol phosphate synthase subunit HisH (209 aa).

Residues 4–209 (PVVVFEYGSG…RLLANWIGSL (206 aa)) form the Glutamine amidotransferase type-1 domain. The active-site Nucleophile is the Cys82. Residues His190 and Glu192 contribute to the active site.

In terms of assembly, heterodimer of HisH and HisF.

Its subcellular location is the cytoplasm. It catalyses the reaction 5-[(5-phospho-1-deoxy-D-ribulos-1-ylimino)methylamino]-1-(5-phospho-beta-D-ribosyl)imidazole-4-carboxamide + L-glutamine = D-erythro-1-(imidazol-4-yl)glycerol 3-phosphate + 5-amino-1-(5-phospho-beta-D-ribosyl)imidazole-4-carboxamide + L-glutamate + H(+). It carries out the reaction L-glutamine + H2O = L-glutamate + NH4(+). It participates in amino-acid biosynthesis; L-histidine biosynthesis; L-histidine from 5-phospho-alpha-D-ribose 1-diphosphate: step 5/9. In terms of biological role, IGPS catalyzes the conversion of PRFAR and glutamine to IGP, AICAR and glutamate. The HisH subunit catalyzes the hydrolysis of glutamine to glutamate and ammonia as part of the synthesis of IGP and AICAR. The resulting ammonia molecule is channeled to the active site of HisF. The polypeptide is Imidazole glycerol phosphate synthase subunit HisH (Leifsonia xyli subsp. xyli (strain CTCB07)).